The sequence spans 144 residues: MSDVSTNLYKSQLLDYYYQRRAESSINKGSRFLISKAVFGTSSLVTKKGDGTYEIGELPKAFELAELTSQFCTINLVPTYSGGIITVRMDLDQSQLQEGKNYPFNTLVVLDNENKPIAIICVQEDSLYVGKTYTAVMAINTTTA.

Structural or assembly protein of tail fibers. The chain is Tail fiber protein R (R) from Enterobacteriaceae (Bacteriophage P1).